The sequence spans 331 residues: tRNA(Ile)-lysidine synthase (331 aa).

Position 29-34 (29-34) interacts with ATP; that stretch reads SGGPDS.

The protein belongs to the tRNA(Ile)-lysidine synthase family.

It localises to the cytoplasm. The enzyme catalyses cytidine(34) in tRNA(Ile2) + L-lysine + ATP = lysidine(34) in tRNA(Ile2) + AMP + diphosphate + H(+). In terms of biological role, ligates lysine onto the cytidine present at position 34 of the AUA codon-specific tRNA(Ile) that contains the anticodon CAU, in an ATP-dependent manner. Cytidine is converted to lysidine, thus changing the amino acid specificity of the tRNA from methionine to isoleucine. This chain is tRNA(Ile)-lysidine synthase, found in Chlorobaculum tepidum (strain ATCC 49652 / DSM 12025 / NBRC 103806 / TLS) (Chlorobium tepidum).